A 226-amino-acid polypeptide reads, in one-letter code: Ribonuclease 3 (226 aa).

Residues 6-128 (INRLQRKLGY…LIGGVFLDSD (123 aa)) form the RNase III domain. E41 contributes to the Mg(2+) binding site. D45 is a catalytic residue. Residues D114 and E117 each coordinate Mg(2+). E117 is a catalytic residue. One can recognise a DRBM domain in the interval 155–225 (DPKTRLQEYL…AEQALKKLEL (71 aa)).

The protein belongs to the ribonuclease III family. Homodimer. Mg(2+) serves as cofactor.

The protein localises to the cytoplasm. It carries out the reaction Endonucleolytic cleavage to 5'-phosphomonoester.. Functionally, digests double-stranded RNA. Involved in the processing of primary rRNA transcript to yield the immediate precursors to the large and small rRNAs (23S and 16S). Processes some mRNAs, and tRNAs when they are encoded in the rRNA operon. Processes pre-crRNA and tracrRNA of type II CRISPR loci if present in the organism. The polypeptide is Ribonuclease 3 (Klebsiella pneumoniae (strain 342)).